The primary structure comprises 117 residues: Large ribosomal subunit protein uL18 (117 aa).

Belongs to the universal ribosomal protein uL18 family. In terms of assembly, part of the 50S ribosomal subunit; part of the 5S rRNA/L5/L18/L25 subcomplex. Contacts the 5S and 23S rRNAs.

Functionally, this is one of the proteins that bind and probably mediate the attachment of the 5S RNA into the large ribosomal subunit, where it forms part of the central protuberance. This is Large ribosomal subunit protein uL18 from Aliivibrio fischeri (strain MJ11) (Vibrio fischeri).